Consider the following 375-residue polypeptide: MQKLQIYVYIYLFMLIVAGPVDLNENSEQKENVEKEGLCNACMWRQNTKSSRLEAIKIQILSKLRLETAPNISKDAIRQLLPKAPPLRELIDQYDVQRDDSSDGSLEDDDYHATTETIITMPTESDLLMQVEGKPKCCFFKFSSKIQYNKVVKAQLWIYLRPVKTPTTVFVQILRLIKPMKDGTRYTGIRSLKLDMNPGTGIWQSIDVKTVLQNWLKQPESNLGIEIKALDENGHDLAVTFPGPGEDGLNPFLEVKVTDTPKRSRRDFGLDCDEHSTESRCCRYPLTVDFEAFGWDWIIAPKRYKANYCSGECEFVFLQKYPHTHLVHQANPRGSAGPCCTPTKMSPINMLYFNGKEQIIYGKIPAMVVDRCGCS.

Positions 1–23 (MQKLQIYVYIYLFMLIVAGPVDL) are cleaved as a signal peptide. A propeptide spanning residues 24 to 266 (NENSEQKENV…VTDTPKRSRR (243 aa)) is cleaved from the precursor. An N-linked (GlcNAc...) asparagine glycan is attached at Asn-71. Disulfide bonds link Cys-272-Cys-282, Cys-281-Cys-340, Cys-309-Cys-372, and Cys-313-Cys-374.

The protein belongs to the TGF-beta family. Homodimer; disulfide-linked. Interacts with WFIKKN2, leading to inhibit its activity. Interacts with FSTL3. Synthesized as large precursor molecule that undergoes proteolytic cleavage to generate an N-terminal propeptide and a disulfide linked C-terminal dimer, which is the biologically active molecule. The circulating form consists of a latent complex of the C-terminal dimer and other proteins, including its propeptide, which maintain the C-terminal dimer in a latent, inactive state. Ligand activation requires additional cleavage of the prodomain by a tolloid-like metalloproteinase.

It localises to the secreted. Acts specifically as a negative regulator of skeletal muscle growth. The sequence is that of Growth/differentiation factor 8 (MSTN) from Sus scrofa (Pig).